Consider the following 53-residue polypeptide: Conotoxin Vc5.3 (53 aa).

The first 15 residues, 1–15 (VILLLLTASAPSVDA), serve as a signal peptide directing secretion. Positions 16-41 (RPKTEDVPLSSFRDNTKSTLQRLLKR) are excised as a propeptide.

This sequence belongs to the conotoxin T superfamily. Post-translationally, contains 2 disulfide bonds that can be either 'C1-C3, C2-C4' or 'C1-C4, C2-C3', since these disulfide connectivities have been observed for conotoxins with cysteine framework V (for examples, see AC P0DQQ7 and AC P81755). In terms of tissue distribution, expressed by the venom duct.

The protein resides in the secreted. In Conus victoriae (Queen Victoria cone), this protein is Conotoxin Vc5.3.